Consider the following 460-residue polypeptide: UDP-N-acetylmuramate--L-alanine ligase (460 aa).

An ATP-binding site is contributed by 118 to 124 (GAHGKTT).

Belongs to the MurCDEF family.

Its subcellular location is the cytoplasm. The enzyme catalyses UDP-N-acetyl-alpha-D-muramate + L-alanine + ATP = UDP-N-acetyl-alpha-D-muramoyl-L-alanine + ADP + phosphate + H(+). The protein operates within cell wall biogenesis; peptidoglycan biosynthesis. Functionally, cell wall formation. In Clostridium botulinum (strain Alaska E43 / Type E3), this protein is UDP-N-acetylmuramate--L-alanine ligase.